The chain runs to 832 residues: Protein P (832 aa).

The segment at 1–177 is terminal protein domain (TP); that stretch reads MPLSYQHFRR…FCGSPYSWEQ (177 aa). A spacer region spans residues 178 to 335; that stretch reads ELQHGAESFH…YCLSHIVNLL (158 aa). Residues 186–229 are disordered; sequence FHQQSSGILSRPPVGSSLQSKHSKSRLGLQSQQGHLARRQQGRS. Residues 336–679 are polymerase/reverse transcriptase domain (RT); sequence EDWGPCAEHG…YLNLYPVARQ (344 aa). The 244-residue stretch at 346–589 folds into the Reverse transcriptase domain; that stretch reads EHHIRTPRTP…YSLNFMGYVI (244 aa). Mg(2+)-binding residues include D418, D540, and D541.

The protein belongs to the hepadnaviridae P protein family.

It catalyses the reaction DNA(n) + a 2'-deoxyribonucleoside 5'-triphosphate = DNA(n+1) + diphosphate. It carries out the reaction Endonucleolytic cleavage to 5'-phosphomonoester.. Its activity is regulated as follows. Activated by host HSP70 and HSP40 in vitro to be able to bind the epsilon loop of the pgRNA. Because deletion of the RNase H region renders the protein partly chaperone-independent, the chaperones may be needed indirectly to relieve occlusion of the RNA-binding site by this domain. Inhibited by several reverse-transcriptase inhibitors: Lamivudine, Adefovir and Entecavir. Its function is as follows. Multifunctional enzyme that converts the viral RNA genome into dsDNA in viral cytoplasmic capsids. This enzyme displays a DNA polymerase activity that can copy either DNA or RNA templates, and a ribonuclease H (RNase H) activity that cleaves the RNA strand of RNA-DNA heteroduplexes in a partially processive 3'- to 5'-endonucleasic mode. Neo-synthesized pregenomic RNA (pgRNA) are encapsidated together with the P protein, and reverse-transcribed inside the nucleocapsid. Initiation of reverse-transcription occurs first by binding the epsilon loop on the pgRNA genome, and is initiated by protein priming, thereby the 5'-end of (-)DNA is covalently linked to P protein. Partial (+)DNA is synthesized from the (-)DNA template and generates the relaxed circular DNA (RC-DNA) genome. After budding and infection, the RC-DNA migrates in the nucleus, and is converted into a plasmid-like covalently closed circular DNA (cccDNA). The activity of P protein does not seem to be necessary for cccDNA generation, and is presumably released from (+)DNA by host nuclear DNA repair machinery. The protein is Protein P of Hepatitis B virus genotype D (isolate Germany/1-91/1991) (HBV-D).